A 447-amino-acid polypeptide reads, in one-letter code: MKLFGTSGIRMKNLDPLIAYKVGFAISKNFKKAVIGRDTRTTGNLIESAITAGLLNGGCDVTTIGMVPTPVLGYSAKDYDLGIMITASHNPPEYNGIKLFNKNGTAFDPKQEKELENIINNDDFNECTWDNIGCVVEDKTAVKKYFEYILQNLNLNTNFNVVVDCANAAGCVVSPNIFTEAGCKVISVNSHCDGRFVGRMPEPNETNLKETVDIIKGLNSNGRNYVGIAHDGDADRMIAIDELGRVTDFDKLLAAFCKYLVQKTGADKIVTTVDASMAIEEYLNEFGAKVIRTKIGDVAVAEELEKTGAIFGGEPSGTWIHRDIHLTPDGILSGLRVLEMMEFYGKKLHEIIDEVPSYCNMREKISCPDNLKQNVMDYVSKEGEKIFEKKPETLDGVRFSFENGWILIRPSGTESYVRVRVEAKEKDFAEKLMKTGISMVKTGISGK.

Ser-88 functions as the Phosphoserine intermediate in the catalytic mechanism. Ser-88, Asp-231, Asp-233, and Asp-235 together coordinate Mg(2+). A Phosphoserine modification is found at Ser-88.

It belongs to the phosphohexose mutase family. Monomer. Also forms large aggregates. Requires Mg(2+) as cofactor. In terms of processing, activated by phosphorylation. Glucose-1,6-bisphosphate or fructose-1,6-bisphosphate can activate the enzyme in vitro. However, since glucose-1,6-bisphosphate is not believed to form in methanogens, the physiologically relevant activator might be a serine kinase protein.

It carries out the reaction alpha-D-glucosamine 1-phosphate = D-glucosamine 6-phosphate. In terms of biological role, catalyzes the conversion of glucosamine-6-phosphate to glucosamine-1-phosphate. Also catalyzes the isomerization of glucose-1-phosphate to glucose-6-phosphate, but at a 5-fold lower rate. This chain is Phosphoglucosamine mutase (glmM), found in Methanococcus maripaludis (strain DSM 14266 / JCM 13030 / NBRC 101832 / S2 / LL).